The sequence spans 327 residues: Cobalamin biosynthesis protein CobD (327 aa).

4 consecutive transmembrane segments (helical) span residues 63–83 (VGIL…ARLF), 84–104 (DVLG…FLAQ), 158–178 (FSDG…PGLL), and 305–325 (VFYA…LPLL).

It belongs to the CobD/CbiB family.

It is found in the cell membrane. It participates in cofactor biosynthesis; adenosylcobalamin biosynthesis. Functionally, converts cobyric acid to cobinamide by the addition of aminopropanol on the F carboxylic group. This Rhizobium meliloti (strain 1021) (Ensifer meliloti) protein is Cobalamin biosynthesis protein CobD.